We begin with the raw amino-acid sequence, 156 residues long: Endogenous retrovirus group K member 21 Pro protein (156 aa).

The region spanning Phe21–Leu96 is the Peptidase A2 domain. Residue Asp26 is part of the active site. The G-patch domain occupies Tyr111–Phe156.

It belongs to the peptidase A2 family. HERV class-II K(HML-2) subfamily. Active as a homodimer. Post-translationally, autoproteolytically processed at the N-terminus. Expected C-terminal autoprocessing not detected. The sequence shown is that of the processed Pro protein.

The enzyme catalyses Processing at the authentic HIV-1 PR recognition site and release of the mature p17 matrix and the p24 capsid protein, as a result of the cleavage of the -SQNY-|-PIVQ- cleavage site.. Functionally, retroviral proteases have roles in the processing of the primary translation products and the maturation of the viral particle. Endogenous Pro proteins may have kept, lost or modified their original function during evolution. This is Endogenous retrovirus group K member 21 Pro protein (ERVK-21) from Homo sapiens (Human).